The primary structure comprises 144 residues: uncharacterized protein (144 aa).

The region spanning I2–L144 is the N-acetyltransferase domain.

The protein belongs to the acetyltransferase family.

The protein localises to the cytoplasm. Its subcellular location is the nucleus. This is an uncharacterized protein from Schizosaccharomyces pombe (strain 972 / ATCC 24843) (Fission yeast).